A 322-amino-acid polypeptide reads, in one-letter code: tRNA (guanine-N(7)-)-methyltransferase (322 aa).

The S-adenosyl-L-methionine site is built by glutamate 29, glutamate 55, and aspartate 105. Aspartate 105 is an active-site residue. Positions 109 and 141 each coordinate substrate.

Belongs to the class I-like SAM-binding methyltransferase superfamily. TrmB family.

It catalyses the reaction guanosine(46) in tRNA + S-adenosyl-L-methionine = N(7)-methylguanosine(46) in tRNA + S-adenosyl-L-homocysteine. It participates in tRNA modification; N(7)-methylguanine-tRNA biosynthesis. Functionally, catalyzes the formation of N(7)-methylguanine at position 46 (m7G46) in tRNA. The protein is tRNA (guanine-N(7)-)-methyltransferase of Deinococcus radiodurans (strain ATCC 13939 / DSM 20539 / JCM 16871 / CCUG 27074 / LMG 4051 / NBRC 15346 / NCIMB 9279 / VKM B-1422 / R1).